A 674-amino-acid polypeptide reads, in one-letter code: 1,4-alpha-glucan branching enzyme GlgB 1 (674 aa).

The active-site Nucleophile is the Asp336. The active-site Proton donor is Glu389.

Belongs to the glycosyl hydrolase 13 family. GlgB subfamily. As to quaternary structure, monomer.

The enzyme catalyses Transfers a segment of a (1-&gt;4)-alpha-D-glucan chain to a primary hydroxy group in a similar glucan chain.. It participates in glycan biosynthesis; glycogen biosynthesis. Catalyzes the formation of the alpha-1,6-glucosidic linkages in glycogen by scission of a 1,4-alpha-linked oligosaccharide from growing alpha-1,4-glucan chains and the subsequent attachment of the oligosaccharide to the alpha-1,6 position. This chain is 1,4-alpha-glucan branching enzyme GlgB 1 (glgB1), found in Clostridium perfringens (strain 13 / Type A).